The following is a 234-amino-acid chain: Leucyl/phenylalanyl-tRNA--protein transferase (234 aa).

It belongs to the L/F-transferase family.

The protein resides in the cytoplasm. It catalyses the reaction N-terminal L-lysyl-[protein] + L-leucyl-tRNA(Leu) = N-terminal L-leucyl-L-lysyl-[protein] + tRNA(Leu) + H(+). It carries out the reaction N-terminal L-arginyl-[protein] + L-leucyl-tRNA(Leu) = N-terminal L-leucyl-L-arginyl-[protein] + tRNA(Leu) + H(+). The enzyme catalyses L-phenylalanyl-tRNA(Phe) + an N-terminal L-alpha-aminoacyl-[protein] = an N-terminal L-phenylalanyl-L-alpha-aminoacyl-[protein] + tRNA(Phe). Functionally, functions in the N-end rule pathway of protein degradation where it conjugates Leu, Phe and, less efficiently, Met from aminoacyl-tRNAs to the N-termini of proteins containing an N-terminal arginine or lysine. This chain is Leucyl/phenylalanyl-tRNA--protein transferase, found in Hahella chejuensis (strain KCTC 2396).